Here is a 167-residue protein sequence, read N- to C-terminus: Putative C-type lectin protein FPV008/FPV253 (167 aa).

The C-type lectin domain maps to cysteine 49–cysteine 152. Disulfide bonds link cysteine 77–cysteine 152 and cysteine 131–cysteine 144.

The polypeptide is Putative C-type lectin protein FPV008/FPV253 (Vertebrata (FPV)).